Here is a 345-residue protein sequence, read N- to C-terminus: Acetylserotonin O-methyltransferase (345 aa).

S-adenosyl-L-methionine-binding positions include Y147, W164, D210, G235–F237, and R252. The active-site Proton donor/acceptor is H255. The substrate site is built by D256, N302, and Q306.

It belongs to the class I-like SAM-binding methyltransferase superfamily. Cation-independent O-methyltransferase family. In terms of assembly, homodimer. In terms of tissue distribution, expressed in the pineal gland (at protein level). In the retina, very low expression is found at the mRNA level, and not at the protein level.

It catalyses the reaction N-acetylserotonin + S-adenosyl-L-methionine = melatonin + S-adenosyl-L-homocysteine + H(+). The protein operates within aromatic compound metabolism; melatonin biosynthesis; melatonin from serotonin: step 1/2. Catalyzes the transfer of a methyl group onto N-acetylserotonin, producing melatonin (N-acetyl-5-methoxytryptamine). In terms of biological role, does not show Acetylserotonin O-methyltransferase activity. In Homo sapiens (Human), this protein is Acetylserotonin O-methyltransferase (ASMT).